The chain runs to 427 residues: 3-phosphoshikimate 1-carboxyvinyltransferase (427 aa).

Lysine 23, serine 24, and arginine 28 together coordinate 3-phosphoshikimate. Lysine 23 contacts phosphoenolpyruvate. Residues glycine 97 and arginine 125 each contribute to the phosphoenolpyruvate site. Residues serine 170, serine 171, glutamine 172, serine 198, aspartate 314, asparagine 337, and lysine 341 each coordinate 3-phosphoshikimate. Glutamine 172 is a binding site for phosphoenolpyruvate. Residue aspartate 314 is the Proton acceptor of the active site. Phosphoenolpyruvate is bound by residues arginine 345, arginine 387, and lysine 412.

It belongs to the EPSP synthase family. In terms of assembly, monomer.

It localises to the cytoplasm. The enzyme catalyses 3-phosphoshikimate + phosphoenolpyruvate = 5-O-(1-carboxyvinyl)-3-phosphoshikimate + phosphate. It functions in the pathway metabolic intermediate biosynthesis; chorismate biosynthesis; chorismate from D-erythrose 4-phosphate and phosphoenolpyruvate: step 6/7. Functionally, catalyzes the transfer of the enolpyruvyl moiety of phosphoenolpyruvate (PEP) to the 5-hydroxyl of shikimate-3-phosphate (S3P) to produce enolpyruvyl shikimate-3-phosphate and inorganic phosphate. The sequence is that of 3-phosphoshikimate 1-carboxyvinyltransferase from Buchnera aphidicola subsp. Acyrthosiphon pisum (strain Tuc7).